The following is a 204-amino-acid chain: MSAQDKLIKAQHLIDMNDIIREGNPTLRAVAKEVEFPLSDDDIILGEKMMQFLKHSQDPVMGEKLGLRAGVGLAAPQIDVSKRIIAVLVPNPEDSEGNPPKEAYSMEEVLYNPKIVSHSVQDAALADGEGCLSVDRVVEGYVVRHARVTVEYYDKHNEKHRIKLKGYNAIVVQHEIDHINGVLFYDRINAKNPFEAKEGMLILE.

Fe cation is bound by residues Cys131 and His174. The active site involves Glu175. His178 provides a ligand contact to Fe cation.

It belongs to the polypeptide deformylase family. Requires Fe(2+) as cofactor.

The catalysed reaction is N-terminal N-formyl-L-methionyl-[peptide] + H2O = N-terminal L-methionyl-[peptide] + formate. In terms of biological role, removes the formyl group from the N-terminal Met of newly synthesized proteins. Requires at least a dipeptide for an efficient rate of reaction. N-terminal L-methionine is a prerequisite for activity but the enzyme has broad specificity at other positions. This Streptococcus equi subsp. zooepidemicus (strain MGCS10565) protein is Peptide deformylase.